We begin with the raw amino-acid sequence, 98 residues long: Alpha-elicitin capsicein (98 aa).

Cystine bridges form between C3–C71, C27–C56, and C51–C95.

This sequence belongs to the elicitin family.

The protein localises to the secreted. Induces local and distal defense responses (incompatible hypersensitive reaction) in plants from the solanaceae and cruciferae families. Elicits leaf necrosis and causes the accumulation of pathogenesis-related proteins. Might interact with the lipidic molecules of the plasma membrane. In Phytophthora capsici, this protein is Alpha-elicitin capsicein.